Here is a 66-residue protein sequence, read N- to C-terminus: Large ribosomal subunit protein bL35 (66 aa).

A compositionally biased stretch (basic residues) spans 1-16 (MPKQKTHRASAKRFKR). Positions 1 to 21 (MPKQKTHRASAKRFKRTGNGG) are disordered.

This sequence belongs to the bacterial ribosomal protein bL35 family.

The sequence is that of Large ribosomal subunit protein bL35 from Lactococcus lactis subsp. cremoris (strain MG1363).